The sequence spans 410 residues: LL-diaminopimelate aminotransferase (410 aa).

The substrate site is built by Y15 and G42. Pyridoxal 5'-phosphate contacts are provided by residues Y72, 108 to 109 (AK), Y132, N188, Y219, and 247 to 249 (SFS). The substrate site is built by K109, Y132, and N188. K250 is modified (N6-(pyridoxal phosphate)lysine). Positions 258 and 293 each coordinate pyridoxal 5'-phosphate. Substrate-binding residues include N293 and R389.

It belongs to the class-I pyridoxal-phosphate-dependent aminotransferase family. LL-diaminopimelate aminotransferase subfamily. As to quaternary structure, homodimer. Pyridoxal 5'-phosphate serves as cofactor.

The enzyme catalyses (2S,6S)-2,6-diaminopimelate + 2-oxoglutarate = (S)-2,3,4,5-tetrahydrodipicolinate + L-glutamate + H2O + H(+). It participates in amino-acid biosynthesis; L-lysine biosynthesis via DAP pathway; LL-2,6-diaminopimelate from (S)-tetrahydrodipicolinate (aminotransferase route): step 1/1. Involved in the synthesis of meso-diaminopimelate (m-DAP or DL-DAP), required for both lysine and peptidoglycan biosynthesis. Catalyzes the direct conversion of tetrahydrodipicolinate to LL-diaminopimelate. The chain is LL-diaminopimelate aminotransferase from Bacteroides thetaiotaomicron (strain ATCC 29148 / DSM 2079 / JCM 5827 / CCUG 10774 / NCTC 10582 / VPI-5482 / E50).